Reading from the N-terminus, the 120-residue chain is Large ribosomal subunit protein uL18 (120 aa).

This sequence belongs to the universal ribosomal protein uL18 family. Part of the 50S ribosomal subunit; part of the 5S rRNA/L5/L18/L25 subcomplex. Contacts the 5S and 23S rRNAs.

This is one of the proteins that bind and probably mediate the attachment of the 5S RNA into the large ribosomal subunit, where it forms part of the central protuberance. The chain is Large ribosomal subunit protein uL18 from Ehrlichia ruminantium (strain Gardel).